Consider the following 74-residue polypeptide: Protein sok (74 aa).

Residues 26-45 (TQHGNKPPSRHEAESLKRRA) are disordered.

This is Protein sok (sok) from Escherichia coli.